A 426-amino-acid chain; its full sequence is Adenylosuccinate synthetase (426 aa).

GTP is bound by residues 12–18 and 40–42; these read GDEGKGK and GHT. Asp-13 serves as the catalytic Proton acceptor. Mg(2+)-binding residues include Asp-13 and Gly-40. IMP contacts are provided by residues 13 to 16, 38 to 41, Thr-130, Arg-144, Gln-224, Thr-239, and Arg-303; these read DEGK and NAGH. The active-site Proton donor is His-41. Residue 299–305 participates in substrate binding; the sequence is TVTNRVR. GTP contacts are provided by residues Arg-305, 331–333, and 413–415; these read KLD and STG.

The protein belongs to the adenylosuccinate synthetase family. As to quaternary structure, homodimer. The cofactor is Mg(2+).

It is found in the cytoplasm. It carries out the reaction IMP + L-aspartate + GTP = N(6)-(1,2-dicarboxyethyl)-AMP + GDP + phosphate + 2 H(+). Its pathway is purine metabolism; AMP biosynthesis via de novo pathway; AMP from IMP: step 1/2. Plays an important role in the de novo pathway of purine nucleotide biosynthesis. Catalyzes the first committed step in the biosynthesis of AMP from IMP. The polypeptide is Adenylosuccinate synthetase (Anaplasma marginale (strain St. Maries)).